Here is a 420-residue protein sequence, read N- to C-terminus: Gamma-glutamyl phosphate reductase (420 aa).

It belongs to the gamma-glutamyl phosphate reductase family.

The protein resides in the cytoplasm. It catalyses the reaction L-glutamate 5-semialdehyde + phosphate + NADP(+) = L-glutamyl 5-phosphate + NADPH + H(+). It functions in the pathway amino-acid biosynthesis; L-proline biosynthesis; L-glutamate 5-semialdehyde from L-glutamate: step 2/2. Its function is as follows. Catalyzes the NADPH-dependent reduction of L-glutamate 5-phosphate into L-glutamate 5-semialdehyde and phosphate. The product spontaneously undergoes cyclization to form 1-pyrroline-5-carboxylate. In Chlorobium luteolum (strain DSM 273 / BCRC 81028 / 2530) (Pelodictyon luteolum), this protein is Gamma-glutamyl phosphate reductase.